Here is a 352-residue protein sequence, read N- to C-terminus: Biotin synthase (352 aa).

Positions 44–262 constitute a Radical SAM core domain; that stretch reads NRVQVSTLLS…LAVARILMPK (219 aa). Cys-59, Cys-63, and Cys-66 together coordinate [4Fe-4S] cluster. [2Fe-2S] cluster-binding residues include Cys-103, Cys-134, Cys-194, and Arg-266.

This sequence belongs to the radical SAM superfamily. Biotin synthase family. As to quaternary structure, homodimer. It depends on [4Fe-4S] cluster as a cofactor. [2Fe-2S] cluster is required as a cofactor.

The catalysed reaction is (4R,5S)-dethiobiotin + (sulfur carrier)-SH + 2 reduced [2Fe-2S]-[ferredoxin] + 2 S-adenosyl-L-methionine = (sulfur carrier)-H + biotin + 2 5'-deoxyadenosine + 2 L-methionine + 2 oxidized [2Fe-2S]-[ferredoxin]. Its pathway is cofactor biosynthesis; biotin biosynthesis; biotin from 7,8-diaminononanoate: step 2/2. Catalyzes the conversion of dethiobiotin (DTB) to biotin by the insertion of a sulfur atom into dethiobiotin via a radical-based mechanism. This is Biotin synthase from Pseudomonas entomophila (strain L48).